A 697-amino-acid polypeptide reads, in one-letter code: Elongation factor G 1 (697 aa).

The 276-residue stretch at 8–283 folds into the tr-type G domain; it reads ERYRNFGIMA…AVVDFLPSPV (276 aa). Residues 17–24, 81–85, and 135–138 each bind GTP; these read AHIDAGKT, DTPGH, and NKMD.

It belongs to the TRAFAC class translation factor GTPase superfamily. Classic translation factor GTPase family. EF-G/EF-2 subfamily.

The protein localises to the cytoplasm. Its function is as follows. Catalyzes the GTP-dependent ribosomal translocation step during translation elongation. During this step, the ribosome changes from the pre-translocational (PRE) to the post-translocational (POST) state as the newly formed A-site-bound peptidyl-tRNA and P-site-bound deacylated tRNA move to the P and E sites, respectively. Catalyzes the coordinated movement of the two tRNA molecules, the mRNA and conformational changes in the ribosome. The polypeptide is Elongation factor G 1 (Anaeromyxobacter dehalogenans (strain 2CP-C)).